A 333-amino-acid chain; its full sequence is Ketol-acid reductoisomerase (NADP(+)) (333 aa).

One can recognise a KARI N-terminal Rossmann domain in the interval 6 to 186 (TRVYTECDAD…GALRAGAIQT (181 aa)). NADP(+) is bound by residues 29–32 (YGSQ), Lys-52, Ser-55, Ser-57, and 87–90 (DPAQ). His-112 is a catalytic residue. Gly-138 is an NADP(+) binding site. Residues 187 to 332 (TFTEETETDL…ARLRALFSWS (146 aa)) enclose the KARI C-terminal knotted domain. Mg(2+) contacts are provided by Asp-195, Glu-199, Glu-231, and Glu-235. Ser-256 lines the substrate pocket.

It belongs to the ketol-acid reductoisomerase family. Requires Mg(2+) as cofactor.

It carries out the reaction (2R)-2,3-dihydroxy-3-methylbutanoate + NADP(+) = (2S)-2-acetolactate + NADPH + H(+). It catalyses the reaction (2R,3R)-2,3-dihydroxy-3-methylpentanoate + NADP(+) = (S)-2-ethyl-2-hydroxy-3-oxobutanoate + NADPH + H(+). Its pathway is amino-acid biosynthesis; L-isoleucine biosynthesis; L-isoleucine from 2-oxobutanoate: step 2/4. It functions in the pathway amino-acid biosynthesis; L-valine biosynthesis; L-valine from pyruvate: step 2/4. In terms of biological role, involved in the biosynthesis of branched-chain amino acids (BCAA). Catalyzes an alkyl-migration followed by a ketol-acid reduction of (S)-2-acetolactate (S2AL) to yield (R)-2,3-dihydroxy-isovalerate. In the isomerase reaction, S2AL is rearranged via a Mg-dependent methyl migration to produce 3-hydroxy-3-methyl-2-ketobutyrate (HMKB). In the reductase reaction, this 2-ketoacid undergoes a metal-dependent reduction by NADPH to yield (R)-2,3-dihydroxy-isovalerate. This Tropheryma whipplei (strain Twist) (Whipple's bacillus) protein is Ketol-acid reductoisomerase (NADP(+)).